A 931-amino-acid chain; its full sequence is MTLAPADLPASLQPLVDRALARLAQVLPEPIPANLLPLLTRLAVTSDFALDTLVRQPALLAQLAAPGCPPIPAPVLDPLQPSDWPAQIRRWRTAMSTRLIWRDLTGLDDVAQTLAGATALAEDCLRLALDALQQEFAQRHGVIADEHGIPQQLVVFGLGKLGGGELNFSSDVDLVYAYPQGGESDGPRPLAAEEYFARLGQRLAKLLDETTVDGFSHRVDLRLRPFGSAGRVALSFAAMDQYFQREGRDWERYAWLKARAVAGDIEAGEAWLQTLRPFVYRRYLDFTALDGLREMKAAITAEVARRELHDDIKRGAGGIREIEFLCQALQLIRGGREPALRERRLLVALDALVAAGQIAPEDGSALREAYLFLRRLENRLQMLRDAQTHVLPSDALDRERIAVGLGYPDWEVLRAALAVQQQRVSTEFAALLAPRKGQAAPDALANYWRSLPEGSNAPLLAEAGFLDANGADQSLRDFAQGTGVKSLSDAARARLDRVLPALLHAATRSPQPDAALKRVLGLLQAVLRRTSYLALLDEQPSALARLVDVLARSALLAERLAAYPLLLDELLDVRVSGPMPDAAGMLAECQQVLAVEDPESALRWLNETRLALSFRMAMATLDGRQGAVDSTRQLAELAQAVVVTVLAMAEADMHAAHGEIPGGRFAIIGYGSLGGLELGFGSDLDLVFLHDNPAGVDASDGARPLEPGRWYARLAQKVMALLGAVTAAGRLYDIDVRLRPDGGKGSLVSSLASYTEYQRERAWTWEHQALVRARGVAGDASLLADFEQVRAQTLGRERDTGVLYADVLKMRGRMRTELDRSDAARLDLKQGAGGVVDLEFLLQTGVLARSARHAALLQPRDTPSLIDALAVAEFLPEDTAQALHGAHATLLDVGLACTLDRRPRLAPTTPAIEEACAAITAACIAAELPFA.

The tract at residues 1-434 (MTLAPADLPA…STEFAALLAP (434 aa)) is adenylyl removase. The segment at 441–931 (PDALANYWRS…ACIAAELPFA (491 aa)) is adenylyl transferase.

This sequence belongs to the GlnE family. Requires Mg(2+) as cofactor.

The catalysed reaction is [glutamine synthetase]-O(4)-(5'-adenylyl)-L-tyrosine + phosphate = [glutamine synthetase]-L-tyrosine + ADP. It carries out the reaction [glutamine synthetase]-L-tyrosine + ATP = [glutamine synthetase]-O(4)-(5'-adenylyl)-L-tyrosine + diphosphate. Its function is as follows. Involved in the regulation of glutamine synthetase GlnA, a key enzyme in the process to assimilate ammonia. When cellular nitrogen levels are high, the C-terminal adenylyl transferase (AT) inactivates GlnA by covalent transfer of an adenylyl group from ATP to specific tyrosine residue of GlnA, thus reducing its activity. Conversely, when nitrogen levels are low, the N-terminal adenylyl removase (AR) activates GlnA by removing the adenylyl group by phosphorolysis, increasing its activity. The regulatory region of GlnE binds the signal transduction protein PII (GlnB) which indicates the nitrogen status of the cell. This Stenotrophomonas maltophilia (strain R551-3) protein is Bifunctional glutamine synthetase adenylyltransferase/adenylyl-removing enzyme.